Here is a 131-residue protein sequence, read N- to C-terminus: Phosphoribosyl-AMP cyclohydrolase (131 aa).

Asp-80 contacts Mg(2+). Residue Cys-81 coordinates Zn(2+). Positions 82 and 84 each coordinate Mg(2+). Residues Cys-98 and Cys-105 each coordinate Zn(2+).

It belongs to the PRA-CH family. As to quaternary structure, homodimer. The cofactor is Mg(2+). It depends on Zn(2+) as a cofactor.

It is found in the cytoplasm. It catalyses the reaction 1-(5-phospho-beta-D-ribosyl)-5'-AMP + H2O = 1-(5-phospho-beta-D-ribosyl)-5-[(5-phospho-beta-D-ribosylamino)methylideneamino]imidazole-4-carboxamide. The protein operates within amino-acid biosynthesis; L-histidine biosynthesis; L-histidine from 5-phospho-alpha-D-ribose 1-diphosphate: step 3/9. In terms of biological role, catalyzes the hydrolysis of the adenine ring of phosphoribosyl-AMP. This is Phosphoribosyl-AMP cyclohydrolase from Azoarcus sp. (strain BH72).